Here is a 396-residue protein sequence, read N- to C-terminus: Protein NDRG1-A (396 aa).

The segment at R326–C396 is disordered. The segment covering S327–G340 has biased composition (low complexity). 4 consecutive repeat copies span residues G340–E349, G350–D359, G360–D369, and G370–T379. Residues G340 to T379 form a 4 X 10 AA tandem repeats of G-[NS]-R-S-R-[AS]-H-T-[DGN]-[DET] region. Basic and acidic residues predominate over residues H346–T377. Positions D378 to K390 are enriched in polar residues.

Belongs to the NDRG family.

In terms of biological role, may be involved in pronephros development, after specification of the pronephros. This chain is Protein NDRG1-A (ndrg1-a), found in Xenopus laevis (African clawed frog).